A 317-amino-acid polypeptide reads, in one-letter code: Olfactory receptor 51Q1 (317 aa).

Over 1-27 the chain is Extracellular; it reads MSQVTNTTQEGIYFILTDIPGFEASHI. N-linked (GlcNAc...) asparagine glycosylation is present at Asn6. The chain crosses the membrane as a helical span at residues 28–48; that stretch reads WISIPVCCLYTISIMGNTTIL. The Cytoplasmic portion of the chain corresponds to 49–56; the sequence is TVIRTEPS. Residues 57-77 form a helical membrane-spanning segment; it reads VHQRMYLFLSMLALTDLGLTL. Topologically, residues 78–101 are extracellular; that stretch reads TTLPTVMQLLWFNVRRISSEACFA. A disulfide bridge connects residues Cys99 and Cys191. Residues 102 to 122 form a helical membrane-spanning segment; the sequence is QFFFLHGFSFMESSVLLAMSV. The Cytoplasmic segment spans residues 123–141; the sequence is DCYVAICCPLHYASILTNE. The chain crosses the membrane as a helical span at residues 142–162; that stretch reads VIGRTGLAIICCCVLAVLPSL. Residues 163 to 198 are Extracellular-facing; sequence FLLKRLPFCHSHLLSRSYCLHQDMIRLVCADIRLNS. The chain crosses the membrane as a helical span at residues 199-219; that stretch reads WYGFALALLIIIVDPLLIVIS. Residues 220 to 239 are Cytoplasmic-facing; the sequence is YTLILKNILGTATWAERLRA. The helical transmembrane segment at 240 to 260 threads the bilayer; sequence LNNCLSHILAVLVLYIPMVGV. The Extracellular segment spans residues 261 to 275; it reads SMTHRFAKHASPLVH. Residues 276–296 form a helical membrane-spanning segment; it reads VIMANIYLLAPPVMNPIIYSV. Topologically, residues 297-317 are cytoplasmic; that stretch reads KNKQIQWGMLNFLSLKNMHSR.

This sequence belongs to the G-protein coupled receptor 1 family.

It is found in the cell membrane. Functionally, odorant receptor. This chain is Olfactory receptor 51Q1 (OR51Q1), found in Homo sapiens (Human).